A 224-amino-acid polypeptide reads, in one-letter code: Cysteine S-methyltransferase NleE (224 aa).

The tract at residues 49-52 (GITR) is interaction with host proteins TAB2, TAB3 and ZRANB3. 6 residues coordinate S-adenosyl-L-methionine: Ala-92, Ser-98, Arg-107, Gln-111, Tyr-204, and Glu-208.

It belongs to the NleE/OspZ family. As to quaternary structure, monomer.

It is found in the secreted. The protein localises to the host nucleus. It carries out the reaction L-cysteinyl-[protein] + S-adenosyl-L-methionine = S-methyl-L-cysteinyl-[protein] + S-adenosyl-L-homocysteine + H(+). Functionally, cysteine methyltransferase effector that inhibits host cell NF-kappa-B activation by preventing nuclear translocation of host protein RELA/p65. Acts by mediating cysteine methylation of host proteins TAB2 and TAB3: methylation of a conserved cysteine residue of the RanBP2-type zinc finger (NZF) of TAB2 and TAB3 disrupts zinc-binding, thereby inactivating the ubiquitin chain-binding activity of TAB2 and TAB3, leading to NF-kappa-B inactivation. Also mediates cysteine methylation of host protein ZRANB3, inactivating its ability to bind ubiquitin chains. The sequence is that of Cysteine S-methyltransferase NleE from Escherichia coli O157:H7.